The following is a 110-amino-acid chain: Host transcription reprogramming factor 2 (110 aa).

The signal sequence occupies residues 1–18 (MHLKASSILALLVIGANA). The C2H2-type zinc finger occupies 68–96 (IMCGYCGKRFWNKPDLEKHIKLKPSKGGH). Residues 88–110 (KLKPSKGGHKGQPYKEHSWNRPT) are disordered. Residues 100–110 (PYKEHSWNRPT) are compositionally biased toward basic and acidic residues.

Its subcellular location is the secreted. It localises to the host nucleus. Functionally, secreted effector that translocates into the nuclei of host cells to reprogram the expression of immunity-associated genes by binding to effector binding elements (EBEs) in rice. Binds the 5'-CCACCTCC-3' EBE of promoters from targeted rice genes and probably recruits a yet to be determined host repressor. Causes ambivalent immunity with increased susceptibility to the hemibiotrophic pathogens Magnaporthe oryzae and Xanthomonas oryzae pv. oryzae, but enhances resistance to Cochliobolus miyabeanus, a necrotrophic pathogen. The chain is Host transcription reprogramming factor 2 from Pyricularia oryzae (strain 70-15 / ATCC MYA-4617 / FGSC 8958) (Rice blast fungus).